A 733-amino-acid polypeptide reads, in one-letter code: SWR1-complex protein 4 (733 aa).

2 disordered regions span residues 1–34 (MTSHDVRDVLNLPSDHAGPRPSKKARTATPRPNL) and 98–128 (PDGTVQDGSAEGQDSAATADNSADKPEDSSF). The 72-residue stretch at 146–217 (NTNLKHPDWT…DLKARYYEVA (72 aa)) folds into the SANT domain. Residues 247 to 299 (KQEQNRKRFAENTLKRSSDEAREEEALLLEIKRIMARTERFNEERRELYNRLD) are a coiled coil. Positions 371 to 384 (AASRRESLAASSTA) are enriched in low complexity. Disordered stretches follow at residues 371–488 (AASR…GSGP) and 564–733 (KKAE…KQKK). Composition is skewed to basic and acidic residues over residues 387–423 (NDHHEPPVREPPVRHERQESRSHHRNESRSERADRHG), 463–484 (PERRKLSEHEEQVYGVSHHDRL), 564–589 (KKAERERAAREAAEARGETVEKKGGE), and 610–653 (DDAK…KGEE). A compositionally biased stretch (low complexity) spans 699-710 (GSSSGAGASSGA).

The protein belongs to the SWC4 family. In terms of assembly, component of the SWR1 chromatin-remodeling complex and of the NuA4 histone acetyltransferase complex.

It is found in the nucleus. In terms of biological role, component of the SWR1 complex which mediates the ATP-dependent exchange of histone H2A for the H2A variant H2A.Z leading to transcriptional regulation of selected genes by chromatin remodeling. Component of the NuA4 histone acetyltransferase complex which is involved in transcriptional activation of selected genes principally by acetylation of nucleosomal histone H4 and H2A. The NuA4 complex is also involved in DNA repair. The protein is SWR1-complex protein 4 (crc-1) of Neurospora crassa (strain ATCC 24698 / 74-OR23-1A / CBS 708.71 / DSM 1257 / FGSC 987).